The chain runs to 545 residues: Phenylalanine--tRNA ligase beta subunit (545 aa).

Residues 266-342 (LSPALRNINV…IGAGFGNLEA (77 aa)) form the B5 domain. Positions 320, 326, 329, and 330 each coordinate Mg(2+).

This sequence belongs to the phenylalanyl-tRNA synthetase beta subunit family. Type 2 subfamily. Tetramer of two alpha and two beta subunits. The cofactor is Mg(2+).

It localises to the cytoplasm. The enzyme catalyses tRNA(Phe) + L-phenylalanine + ATP = L-phenylalanyl-tRNA(Phe) + AMP + diphosphate + H(+). In Methanospirillum hungatei JF-1 (strain ATCC 27890 / DSM 864 / NBRC 100397 / JF-1), this protein is Phenylalanine--tRNA ligase beta subunit.